An 88-amino-acid chain; its full sequence is Small ribosomal subunit protein uS17 (88 aa).

It belongs to the universal ribosomal protein uS17 family. As to quaternary structure, part of the 30S ribosomal subunit.

One of the primary rRNA binding proteins, it binds specifically to the 5'-end of 16S ribosomal RNA. The polypeptide is Small ribosomal subunit protein uS17 (Ligilactobacillus salivarius (strain UCC118) (Lactobacillus salivarius)).